Reading from the N-terminus, the 143-residue chain is Small ribosomal subunit protein bS18m (143 aa).

Belongs to the bacterial ribosomal protein bS18 family. Component of the mitochondrial ribosome small subunit (28S) which comprises a 12S rRNA and about 30 distinct proteins.

It localises to the mitochondrion. The protein is Small ribosomal subunit protein bS18m (MRPS18C) of Bos taurus (Bovine).